Consider the following 850-residue polypeptide: Transcription initiation factor TFIID subunit 4B (850 aa).

Positions 99-240 (GTTTIQLPAN…TPSNDARLKA (142 aa)) are sufficient for interaction with ZNF628. Residues 256–353 (ENVKKCKNFL…VKEVSGDVVI (98 aa)) enclose the TAFH domain. The required for interaction with P65/RELA stretch occupies residues 504 to 526 (PSTLLPQAAGIPQTAKVKQLVVQ). Positions 509–549 (PQAAGIPQTAKVKQLVVQQPSGSSVNHVTSISHSSPLSTQN) match the Nuclear export signal motif. Serine 584 bears the Phosphoserine mark. The region spanning 642–691 (PFLVIGALQKRILDIGKKHDITELNSDAVNLISHATQERLRGLLEKLTTI) is the Histone-fold domain. The tract at residues 788–812 (KRPLESGNESFKDNPSTSGTSSLTA) is disordered. Positions 794-812 (GNESFKDNPSTSGTSSLTA) are enriched in polar residues. Residues 818 to 850 (PRITRICLRDLIFCMEQEREMKYSRALYLALLK) are required for interaction with TAF12.

It belongs to the TAF4 family. TFIID is composed of TATA binding protein (TBP) and a number of TBP-associated factors (TAFs). Heterodimerizes with TAF12/TFII20 via the C-terminal H2A-like histone-fold domain. This heterodimer forms a histone-like octamer with the TAF6/TAFII70-TAF9/TAFII31 heterodimer. Interacts with P65/RELA homodimers and P65/RELA-REL heterodimers. Interaction with POU2AF1, via its C-terminal activation domain, is required for octamer-dependent transcription. Interacts with ZNF628. In terms of tissue distribution, highly expressed in the testes and ovary, whereas lower levels are detected in most other tissues.

Its subcellular location is the nucleus. It localises to the cytoplasm. Its function is as follows. Cell type-specific subunit of the general transcription factor TFIID that may function as a gene-selective coactivator in certain cells. TFIID is a multimeric protein complex that plays a central role in mediating promoter responses to various activators asond repressors. TAF4B is a transcriptional coactivator of the p65/RELA NF-kappa-B subunit. Involved in the activation of a subset of antiapoptotic genes including TNFAIP3. Through interaction with OCBA/POU2AF1, acts as a coactivator of B-cell-specific transcription. Plays a role in spermiogenesis and oogenesis. In Mus musculus (Mouse), this protein is Transcription initiation factor TFIID subunit 4B (Taf4b).